The sequence spans 455 residues: Exodeoxyribonuclease 7 large subunit (455 aa).

The protein belongs to the XseA family. As to quaternary structure, heterooligomer composed of large and small subunits.

It is found in the cytoplasm. The catalysed reaction is Exonucleolytic cleavage in either 5'- to 3'- or 3'- to 5'-direction to yield nucleoside 5'-phosphates.. Bidirectionally degrades single-stranded DNA into large acid-insoluble oligonucleotides, which are then degraded further into small acid-soluble oligonucleotides. The polypeptide is Exodeoxyribonuclease 7 large subunit (Escherichia coli (strain SMS-3-5 / SECEC)).